The primary structure comprises 78 residues: MRSVWKGCFYKNNNNGLSKSSTVINTMLKKKFTLHDGKSYKSILIDRSMVGLKIGEFVFTRKMGVLHKKKVLKKKGKK.

Belongs to the universal ribosomal protein uS19 family.

It is found in the mitochondrion. This chain is Small ribosomal subunit protein uS19m (RPS19), found in Acanthamoeba castellanii (Amoeba).